The following is a 635-amino-acid chain: Threonine--tRNA ligase (635 aa).

Positions 1 to 61 constitute a TGS domain; sequence MTVVRLPDGT…ETDSDLVLIT (61 aa). Positions 242–533 are catalytic; it reads DHRKLGKQLD…LIEHHAGALP (292 aa). Cys-333, His-384, and His-510 together coordinate Zn(2+).

This sequence belongs to the class-II aminoacyl-tRNA synthetase family. In terms of assembly, homodimer. Zn(2+) is required as a cofactor.

The protein localises to the cytoplasm. It carries out the reaction tRNA(Thr) + L-threonine + ATP = L-threonyl-tRNA(Thr) + AMP + diphosphate + H(+). In terms of biological role, catalyzes the attachment of threonine to tRNA(Thr) in a two-step reaction: L-threonine is first activated by ATP to form Thr-AMP and then transferred to the acceptor end of tRNA(Thr). Also edits incorrectly charged L-seryl-tRNA(Thr). This is Threonine--tRNA ligase from Nitrosomonas europaea (strain ATCC 19718 / CIP 103999 / KCTC 2705 / NBRC 14298).